Here is a 174-residue protein sequence, read N- to C-terminus: Large ribosomal subunit protein uL10 (174 aa).

Belongs to the universal ribosomal protein uL10 family. In terms of assembly, part of the ribosomal stalk of the 50S ribosomal subunit. The N-terminus interacts with L11 and the large rRNA to form the base of the stalk. The C-terminus forms an elongated spine to which L12 dimers bind in a sequential fashion forming a multimeric L10(L12)X complex.

Forms part of the ribosomal stalk, playing a central role in the interaction of the ribosome with GTP-bound translation factors. This Geotalea uraniireducens (strain Rf4) (Geobacter uraniireducens) protein is Large ribosomal subunit protein uL10.